Here is an 840-residue protein sequence, read N- to C-terminus: Translation initiation factor IF-2 (840 aa).

Disordered stretches follow at residues 94-157 (KRSP…AGAE) and 169-256 (PVAK…PTGP). Residues 95–143 (RSPDEIEAERQRELEEQRAAEEAERLKAEEAAARQRAEEEARKAEEAAR) are compositionally biased toward basic and acidic residues. The span at 144–157 (AKAAQEAAATAGAE) shows a compositional bias: low complexity. 2 stretches are compositionally biased toward basic and acidic residues: residues 175–191 (AVEE…PKRD) and 223–232 (STDEESDGYR). Positions 233–247 (RGGRGGKSKLKKRNQ) are enriched in basic residues. The 170-residue stretch at 340 to 509 (TRAPVVTVMG…LLQAEVLELK (170 aa)) folds into the tr-type G domain. The G1 stretch occupies residues 349–356 (GHVDHGKT). 349–356 (GHVDHGKT) lines the GTP pocket. Residues 374 to 378 (GITQH) are G2. Residues 395–398 (DTPG) are G3. GTP is bound by residues 395 to 399 (DTPGH) and 449 to 452 (NKID). Residues 449 to 452 (NKID) form a G4 region. Residues 485–487 (SAK) form a G5 region.

It belongs to the TRAFAC class translation factor GTPase superfamily. Classic translation factor GTPase family. IF-2 subfamily.

The protein resides in the cytoplasm. Its function is as follows. One of the essential components for the initiation of protein synthesis. Protects formylmethionyl-tRNA from spontaneous hydrolysis and promotes its binding to the 30S ribosomal subunits. Also involved in the hydrolysis of GTP during the formation of the 70S ribosomal complex. The polypeptide is Translation initiation factor IF-2 (Pseudomonas aeruginosa (strain UCBPP-PA14)).